The chain runs to 358 residues: Trace amine-associated receptor 7b (358 aa).

Topologically, residues 1 to 47 (MATDDDRFPWDQDSILSRDLLSASSMQLCYEKLNRSCVRSPYSPGPR) are extracellular. N-linked (GlcNAc...) asparagine glycosylation occurs at Asn-34. Disulfide bonds link Cys-37–Cys-201 and Cys-120–Cys-205. Residues 48 to 68 (LILYAVFGFGAVLAVCGNLLV) form a helical membrane-spanning segment. The Cytoplasmic portion of the chain corresponds to 69-83 (MTSILHFRQLHSPAN). The chain crosses the membrane as a helical span at residues 84 to 104 (FLVASLACADFLVGLTVMPFS). Over 105–125 (MVRSVEGCWYFGDIYCKFHSS) the chain is Extracellular. Residues 126–147 (FDGSFCYSSIFHLCFISADRYI) form a helical membrane-spanning segment. Residues 148–166 (AVSDPLIYPTRFTASVSGK) are Cytoplasmic-facing. A helical membrane pass occupies residues 167-187 (CITFSWLLSIIYSFSLFYTGV). Residues 188–211 (NEAGLEDLVSALTCVGGCQIAVNQ) are Extracellular-facing. N-linked (GlcNAc...) asparagine glycosylation occurs at Asn-210. The chain crosses the membrane as a helical span at residues 212-232 (SWVFINFLLFLVPALVMMTVY). The Cytoplasmic portion of the chain corresponds to 233–274 (SKIFLIAKQQAQNIEKMGKQTARASESYKDRVAKRERKAAKT). The helical transmembrane segment at 275 to 295 (LGIAVAAFLLSWLPYFIDSII) threads the bilayer. At 296–309 (DAFLGFVTPTYVYE) the chain is on the extracellular side. The chain crosses the membrane as a helical span at residues 310 to 332 (ILVWIGYYNSAMNPLIYAFFYPW). Topologically, residues 333 to 358 (FRKAIKLIVTGKILRENSSATNLFPE) are cytoplasmic.

Belongs to the G-protein coupled receptor 1 family.

The protein localises to the cell membrane. Olfactory receptor specific for N,N-dimethylalkylamines trace amines, such as N,N-dimethylcyclohexylamine. Trace amine compounds are enriched in animal body fluids and act on trace amine-associated receptors (TAARs) to elicit both intraspecific and interspecific innate behaviors. Ligand-binding causes a conformation change that triggers signaling via G(s)-class of G alpha proteins (GNAL or GNAS). This is Trace amine-associated receptor 7b from Rattus norvegicus (Rat).